We begin with the raw amino-acid sequence, 128 residues long: Large ribosomal subunit protein bL12 (128 aa).

This sequence belongs to the bacterial ribosomal protein bL12 family. As to quaternary structure, homodimer. Part of the ribosomal stalk of the 50S ribosomal subunit. Forms a multimeric L10(L12)X complex, where L10 forms an elongated spine to which 2 to 4 L12 dimers bind in a sequential fashion. Binds GTP-bound translation factors.

Functionally, forms part of the ribosomal stalk which helps the ribosome interact with GTP-bound translation factors. Is thus essential for accurate translation. The sequence is that of Large ribosomal subunit protein bL12 from Synechococcus sp. (strain CC9902).